Here is a 266-residue protein sequence, read N- to C-terminus: Hydroxyethylthiazole kinase (266 aa).

Met45 provides a ligand contact to substrate. ATP-binding residues include Lys121 and Ser167. Substrate is bound at residue Gly194.

This sequence belongs to the Thz kinase family. It depends on Mg(2+) as a cofactor.

The enzyme catalyses 5-(2-hydroxyethyl)-4-methylthiazole + ATP = 4-methyl-5-(2-phosphooxyethyl)-thiazole + ADP + H(+). The protein operates within cofactor biosynthesis; thiamine diphosphate biosynthesis; 4-methyl-5-(2-phosphoethyl)-thiazole from 5-(2-hydroxyethyl)-4-methylthiazole: step 1/1. In terms of biological role, catalyzes the phosphorylation of the hydroxyl group of 4-methyl-5-beta-hydroxyethylthiazole (THZ). The polypeptide is Hydroxyethylthiazole kinase (Methanocella arvoryzae (strain DSM 22066 / NBRC 105507 / MRE50)).